We begin with the raw amino-acid sequence, 393 residues long: G protein-activated inward rectifier potassium channel 3 (393 aa).

The segment at 1 to 23 is disordered; that stretch reads MAQENAAFSPGQEEPPRRRGRQR. Topologically, residues 1 to 57 are cytoplasmic; that stretch reads MAQENAAFSPGQEEPPRRRGRQRYVEKDGRCNVQQGNVRETYRYLTDLFTTLVDLQW. The helical transmembrane segment at 58 to 82 threads the bilayer; sequence RLSLLFFVLAYALTWLFFGAIWWLI. Topologically, residues 83–106 are extracellular; that stretch reads AYGRGDLEHLEDTAWTPCVNNLNG. Residues 107 to 118 constitute an intramembrane region (helical; Pore-forming); sequence FVAAFLFSIETE. Residues 119-125 constitute an intramembrane region (pore-forming); it reads TTIGYGH. The short motif at 120–125 is the Selectivity filter element; the sequence is TIGYGH. Topologically, residues 126 to 134 are extracellular; that stretch reads RVITDQCPE. A helical membrane pass occupies residues 135–156; sequence GIVLLLLQAILGSMVNAFMVGC. The Cytoplasmic segment spans residues 157–393; that stretch reads MFVKISQPNK…LPPPESESKV (237 aa). The interval 360–393 is disordered; sequence KVEEEGAGEGAGGEAGADKEQNGCLPPPESESKV. The span at 384–393 shows a compositional bias: pro residues; the sequence is LPPPESESKV. The PDZ-binding motif lies at 390 to 393; the sequence is ESKV.

It belongs to the inward rectifier-type potassium channel (TC 1.A.2.1) family. KCNJ9 subfamily. In terms of assembly, associates with KCNJ3/GIRK1 to form a G-protein-activated heteromultimer pore-forming unit. Interacts (via PDZ-binding motif) with SNX27 (via PDZ domain); the interaction is required when endocytosed to prevent degradation in lysosomes and promote recycling to the plasma membrane.

It localises to the membrane. The enzyme catalyses K(+)(in) = K(+)(out). In terms of biological role, inward rectifier potassium channels are characterized by a greater tendency to allow potassium to flow into the cell rather than out of it. Their voltage dependence is regulated by the concentration of extracellular potassium; as external potassium is raised, the voltage range of the channel opening shifts to more positive voltages. The inward rectification is mainly due to the blockage of outward current by internal magnesium, This receptor is controlled by G proteins. Unable to produce channel activity when expressed alone. Forms a functional channel in association with KCNJ3/GIRK1. This is G protein-activated inward rectifier potassium channel 3 (KCNJ9) from Homo sapiens (Human).